The primary structure comprises 406 residues: Cysteine desulfurase (406 aa).

Lysine 226 bears the N6-(pyridoxal phosphate)lysine mark. Cysteine 364 functions as the Cysteine persulfide intermediate in the catalytic mechanism.

The protein belongs to the class-V pyridoxal-phosphate-dependent aminotransferase family. Csd subfamily. Homodimer. Interacts with SufE and the SufBCD complex composed of SufB, SufC and SufD. The interaction with SufE is required to mediate the direct transfer of the sulfur atom from the S-sulfanylcysteine. Requires pyridoxal 5'-phosphate as cofactor.

The protein localises to the cytoplasm. It carries out the reaction (sulfur carrier)-H + L-cysteine = (sulfur carrier)-SH + L-alanine. The catalysed reaction is L-selenocysteine + AH2 = hydrogenselenide + L-alanine + A + H(+). It functions in the pathway cofactor biosynthesis; iron-sulfur cluster biosynthesis. In terms of biological role, cysteine desulfurases mobilize the sulfur from L-cysteine to yield L-alanine, an essential step in sulfur metabolism for biosynthesis of a variety of sulfur-containing biomolecules. Component of the suf operon, which is activated and required under specific conditions such as oxidative stress and iron limitation. Acts as a potent selenocysteine lyase in vitro, that mobilizes selenium from L-selenocysteine. Selenocysteine lyase activity is however unsure in vivo. The protein is Cysteine desulfurase of Yersinia pseudotuberculosis serotype O:1b (strain IP 31758).